A 195-amino-acid polypeptide reads, in one-letter code: dTTP/UTP pyrophosphatase (195 aa).

Asp73 serves as the catalytic Proton acceptor.

It belongs to the Maf family. YhdE subfamily. A divalent metal cation serves as cofactor.

The protein localises to the cytoplasm. It carries out the reaction dTTP + H2O = dTMP + diphosphate + H(+). The catalysed reaction is UTP + H2O = UMP + diphosphate + H(+). In terms of biological role, nucleoside triphosphate pyrophosphatase that hydrolyzes dTTP and UTP. May have a dual role in cell division arrest and in preventing the incorporation of modified nucleotides into cellular nucleic acids. The polypeptide is dTTP/UTP pyrophosphatase (Desulfotalea psychrophila (strain LSv54 / DSM 12343)).